An 858-amino-acid chain; its full sequence is DNA mismatch repair protein MutS (858 aa).

611–618 (GPNMGGKS) lines the ATP pocket.

Belongs to the DNA mismatch repair MutS family.

Functionally, this protein is involved in the repair of mismatches in DNA. It is possible that it carries out the mismatch recognition step. This protein has a weak ATPase activity. The protein is DNA mismatch repair protein MutS of Actinobacillus succinogenes (strain ATCC 55618 / DSM 22257 / CCUG 43843 / 130Z).